A 242-amino-acid polypeptide reads, in one-letter code: Argininosuccinate synthase (242 aa).

Belongs to the argininosuccinate synthase family. Type 2 subfamily. Homotetramer.

The protein localises to the cytoplasm. The enzyme catalyses L-citrulline + L-aspartate + ATP = 2-(N(omega)-L-arginino)succinate + AMP + diphosphate + H(+). Its pathway is amino-acid biosynthesis; L-arginine biosynthesis; L-arginine from L-ornithine and carbamoyl phosphate: step 2/3. This Dickeya chrysanthemi (Pectobacterium chrysanthemi) protein is Argininosuccinate synthase (argG).